The primary structure comprises 2276 residues: Protein Ycf2 (2276 aa).

1621-1628 (GSIGTGRS) contributes to the ATP binding site.

This sequence belongs to the Ycf2 family.

The protein localises to the plastid. The protein resides in the chloroplast stroma. Functionally, probable ATPase of unknown function. Its presence in a non-photosynthetic plant (Epifagus virginiana) and experiments in tobacco indicate that it has an essential function which is probably not related to photosynthesis. The sequence is that of Protein Ycf2 from Guizotia abyssinica (Niger).